A 358-amino-acid polypeptide reads, in one-letter code: Heme A synthase (358 aa).

Helical transmembrane passes span 22–42, 107–127, 139–159, 173–193, 208–228, 269–289, 302–322, and 324–344; these read IQVW…VGGA, ILGR…WATK, IVPI…ASGI, AFHL…SRGF, FAGW…LVAG, FIHR…AFYV, AFFI…TLLR, and VPIG…CFSV. Heme is bound at residue H271. H332 contacts heme.

This sequence belongs to the COX15/CtaA family. Type 2 subfamily. As to quaternary structure, interacts with CtaB. It depends on heme b as a cofactor.

The protein resides in the cell membrane. The catalysed reaction is Fe(II)-heme o + 2 A + H2O = Fe(II)-heme a + 2 AH2. It functions in the pathway porphyrin-containing compound metabolism; heme A biosynthesis; heme A from heme O: step 1/1. In terms of biological role, catalyzes the conversion of heme O to heme A by two successive hydroxylations of the methyl group at C8. The first hydroxylation forms heme I, the second hydroxylation results in an unstable dihydroxymethyl group, which spontaneously dehydrates, resulting in the formyl group of heme A. This is Heme A synthase from Bartonella quintana (strain Toulouse) (Rochalimaea quintana).